We begin with the raw amino-acid sequence, 367 residues long: 3-dehydroquinate synthase (367 aa).

NAD(+)-binding positions include Gly111–Asp115, Thr135–Ser136, Lys148, Lys157, and Thr175–Thr178. 3 residues coordinate Zn(2+): Glu190, His254, and His271.

Belongs to the sugar phosphate cyclases superfamily. Dehydroquinate synthase family. It depends on Co(2+) as a cofactor. Requires Zn(2+) as cofactor. The cofactor is NAD(+).

It localises to the cytoplasm. The catalysed reaction is 7-phospho-2-dehydro-3-deoxy-D-arabino-heptonate = 3-dehydroquinate + phosphate. It functions in the pathway metabolic intermediate biosynthesis; chorismate biosynthesis; chorismate from D-erythrose 4-phosphate and phosphoenolpyruvate: step 2/7. In terms of biological role, catalyzes the conversion of 3-deoxy-D-arabino-heptulosonate 7-phosphate (DAHP) to dehydroquinate (DHQ). This chain is 3-dehydroquinate synthase, found in Salinibacter ruber (strain DSM 13855 / M31).